A 222-amino-acid chain; its full sequence is Physcion biosynthesis cluster O-methyltransferase (222 aa).

Belongs to the methyltransferase superfamily.

It carries out the reaction emodin + S-adenosyl-L-methionine = physcion + S-adenosyl-L-homocysteine. It functions in the pathway secondary metabolite biosynthesis. In terms of biological role, O-methyltransferase; part of the gene cluster that mediates the biosynthesis of physcion, a natural anthraquinone fungicide that can prevent plant fungal infections. Within the pathway, the O-methyltransferase AcOMT catalyzes the last step by transferring a methyl group to C-6 hydroxyl of emodin to form physcion. AcOMT may also methylate the C-6 hydroxyl group of emodin anthrone to produce physcion-anthrone B. The pathway begins with the polyketide synthase AcPKS that condenses 8 malonyl-CoA units to synthesize atrochrysone thioester which is released from the synthase by the atrochrysone carboxyl ACP thioesterase AcTE that breaks the thioester bond and leads to free atrochrysone carboxylic acid. Spontaneous decarboxylation of atrochrysone carboxylic acid leads to the formation of atrochrysone. Then, atrochrysone undergoes spontaneous dehydration and oxidation, giving the products emodin anthrone and emodin. The O-methyltransferase AcOMT then methylates the C-6 hydroxyl of emodin to form physcion. The protein is Physcion biosynthesis cluster O-methyltransferase of Aspergillus chevalieri (Eurotium chevalieri).